Reading from the N-terminus, the 346-residue chain is Secreted frizzled-related protein 4 (346 aa).

The first 18 residues, 1 to 18 (MFLSILVALCLWLHLALG), serve as a signal peptide directing secretion. Positions 19 to 139 (VRGAPCEAVR…VYDRGVCISP (121 aa)) constitute an FZ domain. Cystine bridges form between Cys24–Cys85, Cys32–Cys78, Cys69–Cys108, Cys97–Cys136, and Cys101–Cys125. Residues Asn38 and Asn68 are each glycosylated (N-linked (GlcNAc...) asparagine). N-linked (GlcNAc...) asparagine glycans are attached at residues Asn116, Asn194, and Asn240. The NTR domain occupies 178-307 (CKCKKVKPTL…IQDKKKTAGR (130 aa)). The segment covering 294–303 (QRRTIQDKKK) has biased composition (basic and acidic residues). The disordered stretch occupies residues 294–346 (QRRTIQDKKKTAGRTSRSNPPKPKGKPPAPKPASPKKNIKTRSAQKKTNPKKV). A compositionally biased stretch (pro residues) spans 313-326 (PPKPKGKPPAPKPA). Residues 330 to 346 (KNIKTRSAQKKTNPKKV) show a composition bias toward basic residues.

The protein belongs to the secreted frizzled-related protein (sFRP) family.

The protein localises to the secreted. Functionally, soluble frizzled-related proteins (sFRPS) function as modulators of Wnt signaling through direct interaction with Wnts. They have a role in regulating cell growth and differentiation in specific cell types. SFRP4 plays a role in bone morphogenesis. May also act as a regulator of adult uterine morphology and function. May also increase apoptosis during ovulation possibly through modulation of FZ1/FZ4/WNT4 signaling. Has phosphaturic effects by specifically inhibiting sodium-dependent phosphate uptake. In Macaca mulatta (Rhesus macaque), this protein is Secreted frizzled-related protein 4 (SFRP4).